Here is a 125-residue protein sequence, read N- to C-terminus: Mitochondrial import inner membrane translocase subunit tim16-A (125 aa).

The segment at E58–E110 is J-like.

Belongs to the TIM16/PAM16 family. Probable component of the PAM complex at least composed of 1 mitochondrial HSP70 protein, 1 GRPE, 1 TIMM44, 1 TIMM16/PAM16 and 1 TIMM14. Associates with the TIM23 complex.

The protein resides in the mitochondrion inner membrane. Its function is as follows. Regulates ATP-dependent protein translocation into the mitochondrial matrix. This is Mitochondrial import inner membrane translocase subunit tim16-A (pam16-a) from Xenopus laevis (African clawed frog).